The following is a 172-amino-acid chain: Adenine phosphoribosyltransferase (172 aa).

It belongs to the purine/pyrimidine phosphoribosyltransferase family. As to quaternary structure, homodimer.

It localises to the cytoplasm. The catalysed reaction is AMP + diphosphate = 5-phospho-alpha-D-ribose 1-diphosphate + adenine. It participates in purine metabolism; AMP biosynthesis via salvage pathway; AMP from adenine: step 1/1. In terms of biological role, catalyzes a salvage reaction resulting in the formation of AMP, that is energically less costly than de novo synthesis. The chain is Adenine phosphoribosyltransferase from Streptococcus mutans serotype c (strain ATCC 700610 / UA159).